A 149-amino-acid polypeptide reads, in one-letter code: Oligosaccharyltransferase complex subunit ostc-A (149 aa).

Residues 1 to 32 (MESLYRVPFTVLECPNLKLKKPSWLHMPSAMT) lie on the Cytoplasmic side of the membrane. The helical transmembrane segment at 33-53 (VYAMVVVSYFLITGGIIYDVI) threads the bilayer. The Extracellular portion of the chain corresponds to 54 to 83 (VEPPSVGSMTDEHGHQRPVAFLAYRVNGQY). A helical transmembrane segment spans residues 84–104 (IMEGLASSFLFTMGGLGFIIL). Residues 105-117 (DRSNTPNIPKLNR) lie on the Cytoplasmic side of the membrane. A helical transmembrane segment spans residues 118 to 138 (FLLLFIGFVCVLLSFFMARVF). Over 139-149 (MRMKLPGYLMG) the chain is Extracellular.

This sequence belongs to the OSTC family. As to quaternary structure, specific component of the STT3A-containing form of the oligosaccharyltransferase (OST) complex.

It is found in the membrane. It participates in protein modification; protein glycosylation. Functionally, specific component of the STT3A-containing form of the oligosaccharyl transferase (OST) complex that catalyzes the initial transfer of a defined glycan (Glc(3)Man(9)GlcNAc(2) in eukaryotes) from the lipid carrier dolichol-pyrophosphate to an asparagine residue within an Asn-X-Ser/Thr consensus motif in nascent polypeptide chains, the first step in protein N-glycosylation. N-glycosylation occurs cotranslationally and the complex associates with the Sec61 complex at the channel-forming translocon complex that mediates protein translocation across the endoplasmic reticulum (ER). All subunits are required for a maximal enzyme activity. The polypeptide is Oligosaccharyltransferase complex subunit ostc-A (Xenopus laevis (African clawed frog)).